Consider the following 79-residue polypeptide: Small ribosomal subunit protein uS17 (79 aa).

Belongs to the universal ribosomal protein uS17 family. Part of the 30S ribosomal subunit.

One of the primary rRNA binding proteins, it binds specifically to the 5'-end of 16S ribosomal RNA. The chain is Small ribosomal subunit protein uS17 from Bartonella tribocorum (strain CIP 105476 / IBS 506).